The sequence spans 104 residues: Ribonuclease P protein component 4 (104 aa).

Residues C63, C66, C89, and C92 each coordinate Zn(2+).

This sequence belongs to the eukaryotic/archaeal RNase P protein component 4 family. In terms of assembly, consists of a catalytic RNA component and at least 4-5 protein subunits. The cofactor is Zn(2+).

The protein localises to the cytoplasm. The enzyme catalyses Endonucleolytic cleavage of RNA, removing 5'-extranucleotides from tRNA precursor.. Its function is as follows. Part of ribonuclease P, a protein complex that generates mature tRNA molecules by cleaving their 5'-ends. The sequence is that of Ribonuclease P protein component 4 from Methanosphaera stadtmanae (strain ATCC 43021 / DSM 3091 / JCM 11832 / MCB-3).